Reading from the N-terminus, the 768-residue chain is MSAETATNPPVDTTPGAAPESATNGSNANVAADTTAGEASQTTSSTTPTAQPHSASLYVGELDPSVTEAMLFELFSSIGQVASIRVCRDAVTRRSLGYAYVNYNNTADGERALEDLNYTLIKGRPCRIMWSQRDPALRKTGQGNVFIKNLDTAIDNKALHDTFAAFGNILSCKVAQDEFGNSKGYGFVHYETAEAAQNAIKHVNGMLLNDKKVFVGHHIAKKDRQSKFEEMKANFTNVYVKNIDQDTTEEEFRDLFEKFGEITSATLARDAESGKSRGFGFVNFTSHDNAAAAVEALNDKDFKGQKLYVGRAQKKHEREEELRKQYEAARIEKASKYQGVNLYIKNLSDDIDDEKLRELFSSYGTITSAKVMRDFAPESTSDSEKEAKKDSKEPETKEEEPKDEAGDNAENKDNKENKAESKKSEKKPLGKSKGFGFVCFSSPDEASKAVTEMNQRMVHGKPLYVALAQRKDVRRSQLEASIQARNTIRQQQAAAAAGMPQPFMQPAVFYGPGQQNFIPNQRGGMPFQQPGMVIPGMPGGRHGQFGGFPGQQGGRGMNPNQQIPPNAYGIGAQGLPMGMQGAGIPNGLNYPQMGQVQAPFGRGRGQAPSGQGMPPNVQGMGPGGQYGRGMPVQQGMGRPGQAGRGQGAPAQAVGQRDENASPNGLTLQVLNAAPPAQQKQMLGEAIYPKIQAQQPELAGKITGMLLEMDNAELLALVDDDAALKAKVDEALTVYDEYVKNKGGDSGEPAADANKSKDASQETAEETKS.

The span at 1 to 11 shows a compositional bias: polar residues; it reads MSAETATNPPV. The tract at residues 1–52 is disordered; it reads MSAETATNPPVDTTPGAAPESATNGSNANVAADTTAGEASQTTSSTTPTAQP. The segment covering 39 to 52 has biased composition (low complexity); the sequence is ASQTTSSTTPTAQP. RRM domains follow at residues 55–133, 143–220, 236–314, and 340–470; these read ASLY…WSQR, GNVF…HHIA, TNVY…RAQK, and VNLY…LAQR. Disordered stretches follow at residues 374 to 428, 633 to 662, and 739 to 768; these read DFAP…EKKP, QQGM…NASP, and KNKG…ETKS. The segment covering 637–646 has biased composition (gly residues); that stretch reads GRPGQAGRGQ. Residues 662–739 form the PABC domain; it reads PNGLTLQVLN…ALTVYDEYVK (78 aa). Residues 753-768 are compositionally biased toward basic and acidic residues; the sequence is NKSKDASQETAEETKS.

The protein belongs to the polyadenylate-binding protein type-1 family.

It localises to the cytoplasm. It is found in the nucleus. In terms of biological role, binds the poly(A) tail of mRNA. Appears to be an important mediator of the multiple roles of the poly(A) tail in mRNA biogenesis, stability and translation. In the nucleus, involved in both mRNA cleavage and polyadenylation. Is also required for efficient mRNA export to the cytoplasm. Acts in concert with a poly(A)-specific nuclease (PAN) to affect poly(A) tail shortening, which may occur concomitantly with either nucleocytoplasmic mRNA transport or translational initiation. In the cytoplasm, stimulates translation initiation and regulates mRNA decay through translation termination-coupled poly(A) shortening, probably mediated by PAN. The sequence is that of Polyadenylate-binding protein, cytoplasmic and nuclear (PAB1) from Coccidioides immitis (strain RS) (Valley fever fungus).